The chain runs to 332 residues: Myogenic-determination protein (332 aa).

The interval 22–54 is disordered; sequence HNGYGQPTHPGYGFSAYSQQNPIAHPGQNPHQT. The region spanning 161-212 is the bHLH domain; that stretch reads DRRKAATMRERRRLRKVNEAFEILKRRTSSNPNQRLPKVEILRNAIEYIESL. Positions 293-309 are enriched in polar residues; sequence TTSPIQNKATPSASDTQ. The tract at residues 293–332 is disordered; that stretch reads TTSPIQNKATPSASDTQSPPSSGATAPTSLHVNFKRKCST. A compositionally biased stretch (low complexity) spans 310–321; it reads SPPSSGATAPTS.

As to quaternary structure, efficient DNA binding requires dimerization with another bHLH protein.

It localises to the nucleus. May play an important role in the early development of muscle. The polypeptide is Myogenic-determination protein (nau) (Drosophila melanogaster (Fruit fly)).